Consider the following 361-residue polypeptide: UPF0283 membrane protein mlr0776 (361 aa).

The segment at 1 to 33 (MTAPRKPAAFRIEPEAAPTQETPKARQAELSRK) is disordered. The segment covering 23–32 (PKARQAELSR) has biased composition (basic and acidic residues). The next 2 membrane-spanning stretches (helical) occupy residues 73-93 (LFGS…VGLW) and 108-128 (LGWL…VILI).

The protein belongs to the UPF0283 family.

Its subcellular location is the cell inner membrane. This Mesorhizobium japonicum (strain LMG 29417 / CECT 9101 / MAFF 303099) (Mesorhizobium loti (strain MAFF 303099)) protein is UPF0283 membrane protein mlr0776.